We begin with the raw amino-acid sequence, 380 residues long: Cytochrome b (380 aa).

A run of 4 helical transmembrane segments spans residues 34-54 (FGSL…LLAM), 78-99 (WLIR…YLHI), 114-134 (WNTG…GYVL), and 179-199 (FFAL…IHLT). Heme b-binding residues include His-84 and His-98. Residues His-183 and His-197 each coordinate heme b. His-202 serves as a coordination point for a ubiquinone. 4 consecutive transmembrane segments (helical) span residues 227-247 (LKDF…ALFT), 289-309 (LGGV…PFLH), 321-341 (LSQT…WIGS), and 348-368 (FITI…ILFP).

The protein belongs to the cytochrome b family. As to quaternary structure, the cytochrome bc1 complex contains 11 subunits: 3 respiratory subunits (MT-CYB, CYC1 and UQCRFS1), 2 core proteins (UQCRC1 and UQCRC2) and 6 low-molecular weight proteins (UQCRH/QCR6, UQCRB/QCR7, UQCRQ/QCR8, UQCR10/QCR9, UQCR11/QCR10 and a cleavage product of UQCRFS1). This cytochrome bc1 complex then forms a dimer. It depends on heme b as a cofactor.

It is found in the mitochondrion inner membrane. Functionally, component of the ubiquinol-cytochrome c reductase complex (complex III or cytochrome b-c1 complex) that is part of the mitochondrial respiratory chain. The b-c1 complex mediates electron transfer from ubiquinol to cytochrome c. Contributes to the generation of a proton gradient across the mitochondrial membrane that is then used for ATP synthesis. The sequence is that of Cytochrome b (MT-CYB) from Coracias caudatus (Lilac-breasted roller).